We begin with the raw amino-acid sequence, 150 residues long: Endoribonuclease YbeY (150 aa).

Positions 102, 106, and 112 each coordinate Zn(2+).

Belongs to the endoribonuclease YbeY family. Zn(2+) serves as cofactor.

It localises to the cytoplasm. Single strand-specific metallo-endoribonuclease involved in late-stage 70S ribosome quality control and in maturation of the 3' terminus of the 16S rRNA. In Thermotoga sp. (strain RQ2), this protein is Endoribonuclease YbeY.